The primary structure comprises 306 residues: Agmatinase (306 aa).

Mn(2+) is bound by residues His-126, Asp-149, His-151, Asp-153, Asp-230, and Asp-232.

The protein belongs to the arginase family. Agmatinase subfamily. It depends on Mn(2+) as a cofactor.

The catalysed reaction is agmatine + H2O = urea + putrescine. It participates in amine and polyamine biosynthesis; putrescine biosynthesis via agmatine pathway; putrescine from agmatine: step 1/1. Functionally, catalyzes the formation of putrescine from agmatine. The polypeptide is Agmatinase (Shigella boydii serotype 18 (strain CDC 3083-94 / BS512)).